The following is a 170-amino-acid chain: Inosine/xanthosine triphosphatase (170 aa).

It belongs to the YjjX NTPase family. In terms of assembly, homodimer. Mg(2+) serves as cofactor. It depends on Mn(2+) as a cofactor.

The catalysed reaction is XTP + H2O = XDP + phosphate + H(+). The enzyme catalyses ITP + H2O = IDP + phosphate + H(+). Phosphatase that hydrolyzes non-canonical purine nucleotides such as XTP and ITP to their respective diphosphate derivatives. Probably excludes non-canonical purines from DNA/RNA precursor pool, thus preventing their incorporation into DNA/RNA and avoiding chromosomal lesions. The polypeptide is Inosine/xanthosine triphosphatase (Aliivibrio fischeri (strain ATCC 700601 / ES114) (Vibrio fischeri)).